The primary structure comprises 727 residues: Polyribonucleotide nucleotidyltransferase (727 aa).

Positions 488 and 494 each coordinate Mg(2+). One can recognise a KH domain in the interval 555 to 614; it reads PKLYTMKINPEKIRDVIGKGGATIRALTDETGCQINIEEDGTITIAATEAAKADEAKRRI. Residues 624 to 692 enclose the S1 motif domain; sequence GKVYEGPVTK…DKGRVKLSMK (69 aa). The interval 691–727 is disordered; that stretch reads MKALADRPAGDSGRPAPAERGERRERRDGGASEQQQQ. Basic and acidic residues predominate over residues 707–720; it reads PAERGERRERRDGG.

Belongs to the polyribonucleotide nucleotidyltransferase family. It depends on Mg(2+) as a cofactor.

The protein localises to the cytoplasm. The catalysed reaction is RNA(n+1) + phosphate = RNA(n) + a ribonucleoside 5'-diphosphate. Functionally, involved in mRNA degradation. Catalyzes the phosphorolysis of single-stranded polyribonucleotides processively in the 3'- to 5'-direction. The polypeptide is Polyribonucleotide nucleotidyltransferase (Acidovorax ebreus (strain TPSY) (Diaphorobacter sp. (strain TPSY))).